Reading from the N-terminus, the 471-residue chain is Trigger factor (471 aa).

Residues 165–244 form the PPIase FKBP-type domain; that stretch reads GDFVSIDLRA…VQSVKERVLP (80 aa). The disordered stretch occupies residues 407–471; sequence VTDASGNPVD…EATAEDPAKS (65 aa). The span at 416 to 443 shows a compositional bias: acidic residues; that stretch reads DLEELVGGTEEDDVTEDATEDVTEDAAP.

Belongs to the FKBP-type PPIase family. Tig subfamily.

It localises to the cytoplasm. It catalyses the reaction [protein]-peptidylproline (omega=180) = [protein]-peptidylproline (omega=0). Involved in protein export. Acts as a chaperone by maintaining the newly synthesized protein in an open conformation. Functions as a peptidyl-prolyl cis-trans isomerase. This Kineococcus radiotolerans (strain ATCC BAA-149 / DSM 14245 / SRS30216) protein is Trigger factor.